The following is a 356-amino-acid chain: Phosphate acyltransferase (356 aa).

Belongs to the PlsX family. Homodimer. Probably interacts with PlsY.

The protein resides in the cytoplasm. It carries out the reaction a fatty acyl-[ACP] + phosphate = an acyl phosphate + holo-[ACP]. It participates in lipid metabolism; phospholipid metabolism. Its function is as follows. Catalyzes the reversible formation of acyl-phosphate (acyl-PO(4)) from acyl-[acyl-carrier-protein] (acyl-ACP). This enzyme utilizes acyl-ACP as fatty acyl donor, but not acyl-CoA. This chain is Phosphate acyltransferase, found in Bartonella bacilliformis (strain ATCC 35685 / KC583 / Herrer 020/F12,63).